Here is a 433-residue protein sequence, read N- to C-terminus: L-lysine 2,3-aminomutase (433 aa).

The 213-residue stretch at 122–334 folds into the Radical SAM core domain; it reads HRYPDRVLFY…SLIGHTTGFA (213 aa). Residues Cys136, Cys140, and Cys143 each contribute to the [4Fe-4S] cluster site. Residue Cys279 coordinates Zn(2+). The residue at position 348 (Lys348) is an N6-(pyridoxal phosphate)lysine. Zn(2+) contacts are provided by Cys389, Cys392, and Cys396.

This sequence belongs to the radical SAM superfamily. KamA family. It depends on [4Fe-4S] cluster as a cofactor. The cofactor is pyridoxal 5'-phosphate. Requires Zn(2+) as cofactor.

The catalysed reaction is L-lysine = (3S)-3,6-diaminohexanoate. Functionally, catalyzes the interconversion of L-alpha-lysine and L-beta-lysine. Is involved in the biosynthesis pathway of N6-acetyl-beta-lysine, a compatible solute produced by methanogenic archaea that helps cells to cope with salt stress. This is L-lysine 2,3-aminomutase (ablA) from Methanococcus maripaludis (strain DSM 14266 / JCM 13030 / NBRC 101832 / S2 / LL).